The following is a 186-amino-acid chain: ATP synthase subunit delta (186 aa).

The protein belongs to the ATPase delta chain family. As to quaternary structure, F-type ATPases have 2 components, F(1) - the catalytic core - and F(0) - the membrane proton channel. F(1) has five subunits: alpha(3), beta(3), gamma(1), delta(1), epsilon(1). F(0) has three main subunits: a(1), b(2) and c(10-14). The alpha and beta chains form an alternating ring which encloses part of the gamma chain. F(1) is attached to F(0) by a central stalk formed by the gamma and epsilon chains, while a peripheral stalk is formed by the delta and b chains.

The protein localises to the cell membrane. In terms of biological role, f(1)F(0) ATP synthase produces ATP from ADP in the presence of a proton or sodium gradient. F-type ATPases consist of two structural domains, F(1) containing the extramembraneous catalytic core and F(0) containing the membrane proton channel, linked together by a central stalk and a peripheral stalk. During catalysis, ATP synthesis in the catalytic domain of F(1) is coupled via a rotary mechanism of the central stalk subunits to proton translocation. This protein is part of the stalk that links CF(0) to CF(1). It either transmits conformational changes from CF(0) to CF(1) or is implicated in proton conduction. This is ATP synthase subunit delta from Wolbachia pipientis wMel.